A 273-amino-acid chain; its full sequence is MTKDIMDAVFIKEMAKTTSNLYRLGWDERNGGNITYLLDEKEVVEYLDVKQIIRTIPMDFDGEKLAGKYFLVTGSGKYFKNVEEAPAVNLGVIQVSEDGKAVHLLWGYTDGGLPTSELPAHFMSHIARLSVDPENRVVMHCHATHLLAMTFTHELTEREFTRTLWQMCTECLVVFPEGVGIIPWLVPGTNEIGEATSEKMKENRLIVWPHHGIYGAGKSMDETFGLIETAEKAAEVYTIVMSQGGIKQAITDEQLKALGERFSVEAKAGYLNN.

Residue glutamate 117 is part of the active site. Zn(2+)-binding residues include histidine 140, histidine 142, and histidine 211.

It belongs to the aldolase class II family. RhaD subfamily. Requires Zn(2+) as cofactor.

It is found in the cytoplasm. The catalysed reaction is L-rhamnulose 1-phosphate = (S)-lactaldehyde + dihydroxyacetone phosphate. The protein operates within carbohydrate degradation; L-rhamnose degradation; glycerone phosphate from L-rhamnose: step 3/3. Catalyzes the reversible cleavage of L-rhamnulose-1-phosphate to dihydroxyacetone phosphate (DHAP) and L-lactaldehyde. The polypeptide is Rhamnulose-1-phosphate aldolase (Listeria monocytogenes serotype 4a (strain HCC23)).